We begin with the raw amino-acid sequence, 127 residues long: Holo-[acyl-carrier-protein] synthase (127 aa).

The Mg(2+) site is built by D8 and E56.

This sequence belongs to the P-Pant transferase superfamily. AcpS family. Mg(2+) is required as a cofactor.

It localises to the cytoplasm. The enzyme catalyses apo-[ACP] + CoA = holo-[ACP] + adenosine 3',5'-bisphosphate + H(+). In terms of biological role, transfers the 4'-phosphopantetheine moiety from coenzyme A to a Ser of acyl-carrier-protein. The chain is Holo-[acyl-carrier-protein] synthase from Deinococcus deserti (strain DSM 17065 / CIP 109153 / LMG 22923 / VCD115).